The following is a 491-amino-acid chain: Putative ABC transporter ATP-binding protein TDE_0906 (491 aa).

ABC transporter domains lie at 2–241 (INLN…KQGL) and 267–491 (LTLH…KERL). Residues 36 to 43 (GKSGCGKT) and 300 to 307 (GKNGCGKT) each bind ATP.

It belongs to the ABC transporter superfamily.

It localises to the cell inner membrane. In terms of biological role, probably part of an ABC transporter complex. Responsible for energy coupling to the transport system. The polypeptide is Putative ABC transporter ATP-binding protein TDE_0906 (Treponema denticola (strain ATCC 35405 / DSM 14222 / CIP 103919 / JCM 8153 / KCTC 15104)).